The chain runs to 434 residues: Enolase (434 aa).

Residues H158 and E167 each contribute to the substrate site. E210 acts as the Proton donor in catalysis. 3 residues coordinate Mg(2+): D245, E294, and D319. 2 residues coordinate substrate: E294 and D319. Catalysis depends on K344, which acts as the Proton acceptor. Residues 371–374 (SHRS) and K395 each bind substrate.

It belongs to the enolase family. As to quaternary structure, homodimer. Mg(2+) is required as a cofactor.

It is found in the cytoplasm. The enzyme catalyses (2R)-2-phosphoglycerate = phosphoenolpyruvate + H2O. Its pathway is carbohydrate degradation; glycolysis; pyruvate from D-glyceraldehyde 3-phosphate: step 4/5. The polypeptide is Enolase (Doryteuthis pealeii (Longfin inshore squid)).